An 89-amino-acid chain; its full sequence is Mitochondrial import inner membrane translocase subunit Tim9 (89 aa).

An N-acetylalanine modification is found at Ala2. Positions 28-52 (CFLDCVKDFTTREVKPEEVTCSEHC) match the Twin CX3C motif motif. 2 cysteine pairs are disulfide-bonded: Cys28/Cys52 and Cys32/Cys48.

This sequence belongs to the small Tim family. As to quaternary structure, heterohexamer; composed of 3 copies of TIMM9 and 3 copies of TIMM10/TIM10A, named soluble 70 kDa complex. The complex forms a 6-bladed alpha-propeller structure and associates with the TIMM22 component of the TIM22 complex. Interacts with multi-pass transmembrane proteins in transit. Also forms a complex composed of TIMM9, TIMM10/TIM10A and FXC1/TIM10B.

Its subcellular location is the mitochondrion inner membrane. Mitochondrial intermembrane chaperone that participates in the import and insertion of multi-pass transmembrane proteins into the mitochondrial inner membrane. May also be required for the transfer of beta-barrel precursors from the TOM complex to the sorting and assembly machinery (SAM complex) of the outer membrane. Acts as a chaperone-like protein that protects the hydrophobic precursors from aggregation and guide them through the mitochondrial intermembrane space. The protein is Mitochondrial import inner membrane translocase subunit Tim9 (Timm9) of Rattus norvegicus (Rat).